The sequence spans 69 residues: Large ribosomal subunit protein bL31 (69 aa).

Residues cysteine 16, cysteine 18, cysteine 37, and cysteine 40 each coordinate Zn(2+).

The protein belongs to the bacterial ribosomal protein bL31 family. Type A subfamily. Part of the 50S ribosomal subunit. Requires Zn(2+) as cofactor.

In terms of biological role, binds the 23S rRNA. This Syntrophotalea carbinolica (strain DSM 2380 / NBRC 103641 / GraBd1) (Pelobacter carbinolicus) protein is Large ribosomal subunit protein bL31.